A 248-amino-acid chain; its full sequence is 2,3-bisphosphoglycerate-dependent phosphoglycerate mutase (248 aa).

Residues 8 to 15 (RHGESIWN), 21 to 22 (TG), Arg-60, 87 to 90 (EKHY), Lys-98, 114 to 115 (RR), and 183 to 184 (GN) contribute to the substrate site. His-9 serves as the catalytic Tele-phosphohistidine intermediate. Glu-87 serves as the catalytic Proton donor/acceptor.

This sequence belongs to the phosphoglycerate mutase family. BPG-dependent PGAM subfamily.

It catalyses the reaction (2R)-2-phosphoglycerate = (2R)-3-phosphoglycerate. Its pathway is carbohydrate degradation; glycolysis; pyruvate from D-glyceraldehyde 3-phosphate: step 3/5. Its function is as follows. Catalyzes the interconversion of 2-phosphoglycerate and 3-phosphoglycerate. This chain is 2,3-bisphosphoglycerate-dependent phosphoglycerate mutase, found in Parabacteroides distasonis (strain ATCC 8503 / DSM 20701 / CIP 104284 / JCM 5825 / NCTC 11152).